The primary structure comprises 134 residues: Gastrin-releasing peptide (134 aa).

An N-terminal signal peptide occupies residues 1 to 23; it reads MRGREVPLVLLALVLCLAPRGWA. Methionine 50 is modified (methionine amide). The propeptide occupies 54–134; sequence SVAESPQLHE…QHEGRNPQLN (81 aa). Positions 95 to 134 are disordered; the sequence is GHQMPPWEPLSIHQPAWDSEDVSNFKDTGPQHEGRNPQLN. A compositionally biased stretch (basic and acidic residues) spans 123 to 134; sequence GPQHEGRNPQLN.

The protein belongs to the bombesin/neuromedin-B/ranatensin family. As to expression, detected in adrenal medulla (at protein level).

It localises to the cytoplasmic vesicle. It is found in the secretory vesicle lumen. The protein resides in the secreted. The protein localises to the cell projection. Its subcellular location is the neuron projection. Its function is as follows. Stimulates the release of gastrin and other gastrointestinal hormones. Contributes to the perception of prurient stimuli and to the transmission of itch signals in the spinal cord that promote scratching behavior. Contributes primarily to nonhistaminergic itch sensation. In one study, shown to act in the amygdala as part of an inhibitory network which inhibits memory specifically related to learned fear. In another study, shown to act on vasoactive intestinal peptide (VIP)-expressing cells in the auditory cortex, most likely via extrasynaptic diffusion from local and long-range sources, to mediate disinhibition of glutamatergic cells via VIP cell-specific GRPR signaling which leads to enhanced auditory fear memories. Contributes to the regulation of food intake. Inhibits voltage-gated sodium channels but enhances voltage-gated potassium channels in hippocampal neurons. Induces sighing by acting directly on the pre-Botzinger complex, a cluster of several thousand neurons in the ventrolateral medulla responsible for inspiration during respiratory activity. In terms of biological role, induces an itch response through activation of receptors present on mast cells, triggering mast cell degranulation. In Bos taurus (Bovine), this protein is Gastrin-releasing peptide (GRP).